We begin with the raw amino-acid sequence, 470 residues long: E3 ubiquitin-protein ligase TRIM21 (470 aa).

An RING-type zinc finger spans residues 20-59 (CSICLDPMVEPMSIECGHCFCKECIFEVGKNGGSSCPECR). Positions 96, 99, 118, and 124 each coordinate Zn(2+). The B box-type zinc finger occupies 96–127 (CMKHGEKLHLFCEEDGQALCWVCAQSGKHRDH). The stretch at 188 to 250 (LQNSLLAQEE…RGSELELLQE (63 aa)) forms a coiled coil. The 199-residue stretch at 272–470 (DLTSTCPVPG…APLKLCPLKM (199 aa)) folds into the B30.2/SPRY domain.

It belongs to the TRIM/RBCC family. In terms of assembly, homotrimer. Component of a SCF(SKP2)-like complex containing CUL1, SKP1, TRIM21 and SKP2. Interacts with CALR, CUL1, FBXW11, HSPA5, IKBKB, IRF3, SKP1 and VCP. Interacts with SKP2; the interaction with SKP2 does not depend on an intact F-box domain. Interacts (via N-terminus and C-terminus) with DCP2 (via N-terminus and C-terminus). Interacts (via C-terminus) with IRF8 (via C-terminus). Interacts with ULK1, BECN1 and with ATG8 family members, including GABARAP, GABARAPL1, GABARAPL2 and MAP1LC3C/LC3C. Interacts with TRIM21 and SQSTM1/sequestosome 1. Interacts with IRF3. Interacts (via the SPRY domain) with NMI (via coiled-coil domain); the interaction promotes 'Lys-63'-linked ubiquitination of NMI. Interacts with IFI35 and NMI; the interaction facilitates NMI-IFI35 complex formation. In terms of processing, autoubiquitinated; does not lead to its proteasomal degradation. Deubiquitinated by USP4; leading to its stabilization. Autoubiquitinated.

The protein localises to the cytoplasm. The protein resides in the cytoplasmic vesicle. It is found in the autophagosome. Its subcellular location is the nucleus. It localises to the P-body. The protein localises to the stress granule. It catalyses the reaction S-ubiquitinyl-[E2 ubiquitin-conjugating enzyme]-L-cysteine + [acceptor protein]-L-lysine = [E2 ubiquitin-conjugating enzyme]-L-cysteine + N(6)-ubiquitinyl-[acceptor protein]-L-lysine.. The protein operates within protein modification; protein ubiquitination. Its function is as follows. E3 ubiquitin-protein ligase whose activity is dependent on E2 enzymes, UBE2D1, UBE2D2, UBE2E1 and UBE2E2. Forms a ubiquitin ligase complex in cooperation with the E2 UBE2D2 that is used not only for the ubiquitination of USP4 and IKBKB but also for its self-ubiquitination. Component of cullin-RING-based SCF (SKP1-CUL1-F-box protein) E3 ubiquitin-protein ligase complexes such as SCF(SKP2)-like complexes. A TRIM21-containing SCF(SKP2)-like complex is shown to mediate ubiquitination of CDKN1B ('Thr-187' phosphorylated-form), thereby promoting its degradation by the proteasome. Monoubiquitinates IKBKB that will negatively regulates Tax-induced NF-kappa-B signaling. Negatively regulates IFN-beta production post-pathogen recognition by catalyzing polyubiquitin-mediated degradation of IRF3. Mediates the ubiquitin-mediated proteasomal degradation of IgG1 heavy chain, which is linked to the VCP-mediated ER-associated degradation (ERAD) pathway. Promotes IRF8 ubiquitination, which enhanced the ability of IRF8 to stimulate cytokine genes transcription in macrophages. Plays a role in the regulation of the cell cycle progression. Enhances the decapping activity of DCP2. Exists as a ribonucleoprotein particle present in all mammalian cells studied and composed of a single polypeptide and one of four small RNA molecules. At least two isoforms are present in nucleated and red blood cells, and tissue specific differences in RO/SSA proteins have been identified. The common feature of these proteins is their ability to bind HY RNAs.2. Involved in the regulation of innate immunity and the inflammatory response in response to IFNG/IFN-gamma. Organizes autophagic machinery by serving as a platform for the assembly of ULK1, Beclin 1/BECN1 and ATG8 family members and recognizes specific autophagy targets, thus coordinating target recognition with assembly of the autophagic apparatus and initiation of autophagy. Also regulates autophagy through FIP200/RB1CC1 ubiquitination and subsequent decreased protein stability. Represses the innate antiviral response by facilitating the formation of the NMI-IFI35 complex through 'Lys-63'-linked ubiquitination of NMI. During viral infection, promotes cell pyroptosis by mediating 'Lys-6'-linked ubiquitination of ISG12a/IFI27, facilitating its translocation into the mitochondria and subsequent CASP3 activation. When up-regulated through the IFN/JAK/STAT signaling pathway, promotes 'Lys-27'-linked ubiquitination of MAVS, leading to the recruitment of TBK1 and up-regulation of innate immunity. Mediates 'Lys-63'-linked polyubiquitination of G3BP1 in response to heat shock, leading to stress granule disassembly. This chain is E3 ubiquitin-protein ligase TRIM21 (Trim21), found in Mus musculus (Mouse).